Here is a 666-residue protein sequence, read N- to C-terminus: Vicilin-like antimicrobial peptides 2-2 (666 aa).

An N-terminal signal peptide occupies residues 1-27 (MAINTSNLCSLLFLLSLFLLSTTVSLA). Disordered stretches follow at residues 161–191 (QQKR…DPQQ) and 221–251 (RQHG…SDNP). Residues 239 to 251 (RYEEGEEKQSDNP) are compositionally biased toward basic and acidic residues. Cupin type-1 domains are found at residues 271-410 (SVLE…ERLR) and 455-625 (YNLF…KEVE).

It belongs to the 7S seed storage protein family.

It localises to the secreted. Antimicrobial peptides 2b, 2c and 2d have antibacterial and antifungal activity against a range of species. This is Vicilin-like antimicrobial peptides 2-2 from Macadamia integrifolia (Macadamia nut).